The chain runs to 75 residues: Small ribosomal subunit protein bS18 (75 aa).

This sequence belongs to the bacterial ribosomal protein bS18 family. In terms of assembly, part of the 30S ribosomal subunit. Forms a tight heterodimer with protein bS6.

Its function is as follows. Binds as a heterodimer with protein bS6 to the central domain of the 16S rRNA, where it helps stabilize the platform of the 30S subunit. The polypeptide is Small ribosomal subunit protein bS18 (Alteromonas mediterranea (strain DSM 17117 / CIP 110805 / LMG 28347 / Deep ecotype)).